The primary structure comprises 161 residues: Large ribosomal subunit protein bL21m (161 aa).

The transit peptide at 1 to 35 directs the protein to the mitochondrion; sequence MLQLKFIWPVARITPIYRPFTSHPFRNLATSSSIS.

The protein belongs to the bacterial ribosomal protein bL21 family. Component of the mitochondrial large ribosomal subunit (mt-LSU). Mature yeast 74S mitochondrial ribosomes consist of a small (37S) and a large (54S) subunit. The 37S small subunit contains a 15S ribosomal RNA (15S mt-rRNA) and 34 different proteins. The 54S large subunit contains a 21S rRNA (21S mt-rRNA) and 46 different proteins.

The protein localises to the mitochondrion. In terms of biological role, component of the mitochondrial ribosome (mitoribosome), a dedicated translation machinery responsible for the synthesis of mitochondrial genome-encoded proteins, including at least some of the essential transmembrane subunits of the mitochondrial respiratory chain. The mitoribosomes are attached to the mitochondrial inner membrane and translation products are cotranslationally integrated into the membrane. In Saccharomyces cerevisiae (strain ATCC 204508 / S288c) (Baker's yeast), this protein is Large ribosomal subunit protein bL21m (MRPL49).